The chain runs to 197 residues: Protein SYM1 (197 aa).

4 consecutive transmembrane segments (helical) span residues 20–40, 55–75, 97–117, and 137–157; these read AIMT…LFPT, AVIY…KILN, VDQL…MSIM, and LLTN…VVPL.

The protein belongs to the peroxisomal membrane protein PXMP2/4 family.

It is found in the mitochondrion inner membrane. Functionally, may be involved in cellular response to stress. Required to maintain mitochondrial DNA (mtDNA) integrity and stability. Required for ethanol metabolism and tolerance during heat shock. In Saccharomyces cerevisiae (strain ATCC 204508 / S288c) (Baker's yeast), this protein is Protein SYM1 (SYM1).